We begin with the raw amino-acid sequence, 505 residues long: tRNA-2-methylthio-N(6)-dimethylallyladenosine synthase (505 aa).

One can recognise an MTTase N-terminal domain in the interval 14 to 132 (RTYEVRTYGC…LPVLLERARV (119 aa)). [4Fe-4S] cluster is bound by residues C23, C61, C95, C169, C173, and C176. The Radical SAM core domain maps to 155–386 (RESAYAAWVS…ALQEEISWEE (232 aa)). The TRAM domain maps to 388–456 (KKQVGRTLEL…PHHLLAEGPV (69 aa)).

The protein belongs to the methylthiotransferase family. MiaB subfamily. Monomer. The cofactor is [4Fe-4S] cluster.

The protein localises to the cytoplasm. The enzyme catalyses N(6)-dimethylallyladenosine(37) in tRNA + (sulfur carrier)-SH + AH2 + 2 S-adenosyl-L-methionine = 2-methylsulfanyl-N(6)-dimethylallyladenosine(37) in tRNA + (sulfur carrier)-H + 5'-deoxyadenosine + L-methionine + A + S-adenosyl-L-homocysteine + 2 H(+). Catalyzes the methylthiolation of N6-(dimethylallyl)adenosine (i(6)A), leading to the formation of 2-methylthio-N6-(dimethylallyl)adenosine (ms(2)i(6)A) at position 37 in tRNAs that read codons beginning with uridine. The protein is tRNA-2-methylthio-N(6)-dimethylallyladenosine synthase of Streptomyces viridosporus (strain ATCC 14672 / DSM 40746 / JCM 4963 / KCTC 9882 / NRRL B-12104 / FH 1290) (Streptomyces ghanaensis).